We begin with the raw amino-acid sequence, 414 residues long: Mannan endo-1,4-beta-mannosidase 2 (414 aa).

The first 25 residues, 1–25 (MAYFQRLISCIFVLFLLSLAFACEA), serve as a signal peptide directing secretion. Substrate is bound by residues Trp95 and Asn210. The active-site Proton donor is the Glu211. Substrate is bound at residue Tyr288. The Nucleophile role is filled by Glu328. Substrate is bound at residue Trp370.

The protein belongs to the glycosyl hydrolase 5 (cellulase A) family.

The protein localises to the secreted. The enzyme catalyses Random hydrolysis of (1-&gt;4)-beta-D-mannosidic linkages in mannans, galactomannans and glucomannans.. Its function is as follows. Possesses endo-beta-mannanase activity in vitro. May be involved in seed germination by weakening the endosperm cap prior to radicle emergence. The polypeptide is Mannan endo-1,4-beta-mannosidase 2 (MAN2) (Solanum lycopersicum (Tomato)).